Consider the following 370-residue polypeptide: Cyanuric acid amidohydrolase (370 aa).

Residues 1–106 (MRTTSVGVFK…TVFTRREVER (106 aa)) are RU A. Substrate is bound by residues Arg54 and 85-86 (SG). Positions 115 to 251 (RLSIGMAHTR…NVVIVLGNSA (137 aa)) are RU B. Lys165 is a catalytic residue. Substrate-binding positions include Arg197 and 234-235 (SA). The Nucleophile role is filled by Ser234. Residues 257 to 370 (FEIGHAVMND…PVAVIARLSD (114 aa)) are RU C. Glu302 lines the Mg(2+) pocket. Residues Arg329 and 348-349 (SG) each bind substrate. Mg(2+)-binding residues include Ala351, Gln354, Gly355, Pro356, and Gly359.

Belongs to the cyclic amide hydrolase (CyAH) family. As to quaternary structure, homotetramer.

It catalyses the reaction cyanurate + H2O = 1-carboxybiuret + H(+). The protein operates within xenobiotic degradation; atrazine degradation; biuret from cyanurate: step 1/1. With respect to regulation, inhibited by barbituric acid. Functionally, responsible for the hydrolysis of cyanuric acid, an intermediate formed during catabolism of s-triazine based compounds in herbicides such as atrazine and polymers such as melamine. Catalyzes the hydrolytic opening of the s-triazine ring of cyanuric acid (2,4,6-trihydroxy-s-triazine) to yield carbon dioxide and carboxybiuret, which spontaneously decarboxylates to biuret. The sequence is that of Cyanuric acid amidohydrolase from Bradyrhizobium diazoefficiens (strain JCM 10833 / BCRC 13528 / IAM 13628 / NBRC 14792 / USDA 110).